The sequence spans 83 residues: Mu-theraphotoxin-Hhn2o (83 aa).

The signal sequence occupies residues 1–21 (MKASMFLALAGLVLLFVVGYA). Positions 22 to 48 (SESEEKEFPIELLSKIFAVDVFKGEER) are excised as a propeptide. Cystine bridges form between Cys50/Cys65, Cys57/Cys70, and Cys64/Cys77. At Leu81 the chain carries Leucine amide.

Belongs to the neurotoxin 10 (Hwtx-1) family. 15 (Hntx-3) subfamily. As to quaternary structure, monomer. Expressed by the venom gland.

Its subcellular location is the secreted. In terms of biological role, lethal neurotoxin. Selectively blocks tetrodotoxin-sensitive voltage-gated sodium channels (Nav). Does not affect tetrodotoxin-resistant voltage-gated sodium channels or calcium channels. In Cyriopagopus hainanus (Chinese bird spider), this protein is Mu-theraphotoxin-Hhn2o.